The sequence spans 425 residues: Synaptotagmin-4 (425 aa).

Residues 1–16 lie on the Vesicular side of the membrane; it reads MAPITTSRVEFDEIPT. A helical membrane pass occupies residues 17-37; that stretch reads VVGIFSAFGLVFTVSLFAWIC. At 38-425 the chain is on the cytoplasmic side; that stretch reads CQRRSAKSNK…IAKWHMLCDG (388 aa). Residues 127–147 form a disordered region; that stretch reads TETEKEANSPESLKSSTSLTS. Ser-135 is subject to Phosphoserine; by MAPK8. Positions 137–146 are enriched in low complexity; that stretch reads ESLKSSTSLT. C2 domains lie at 153–274 and 287–420; these read KLGT…MLMT and GRGE…AKWH. The Ca(2+) site is built by Asp-246, Ser-249, and Asp-252.

This sequence belongs to the synaptotagmin family. As to quaternary structure, interacts with KIF1A; the interaction increases in presence of calcium and decreases when SYT4 is phosphorylated at Ser-135. The cofactor is Ca(2+). In terms of processing, phosphorylation at Ser-135 by MAPK8/JNK1 reduces interaction with KIF1A and neuronal dense core vesicles mobility. In terms of tissue distribution, expressed in many regions of the nervous system but is undetectable in extra neural tissues.

The protein localises to the cytoplasmic vesicle. The protein resides in the secretory vesicle. It localises to the neuronal dense core vesicle membrane. Functionally, synaptotagmin family member which does not bind Ca(2+). Plays a role in dendrite formation by melanocytes. In terms of biological role, synaptotagmin family member which does not bind Ca(2+). Involved in neuronal dense core vesicles (DCVs) mobility through its interaction with KIF1A. Upon increased neuronal activity, phosphorylation by MAPK8/JNK1 destabilizes the interaction with KIF1A and captures DCVs to synapses. Plays a role in dendrite formation by melanocytes. The polypeptide is Synaptotagmin-4 (Syt4) (Mus musculus (Mouse)).